A 286-amino-acid chain; its full sequence is Ribose-5-phosphate isomerase (286 aa).

Belongs to the ribose 5-phosphate isomerase family.

It is found in the cytoplasm. It catalyses the reaction aldehydo-D-ribose 5-phosphate = D-ribulose 5-phosphate. Its pathway is carbohydrate degradation; pentose phosphate pathway; D-ribose 5-phosphate from D-ribulose 5-phosphate (non-oxidative stage): step 1/1. This chain is Ribose-5-phosphate isomerase (RKI1), found in Mycosarcoma maydis (Corn smut fungus).